The sequence spans 194 residues: uncharacterized protein (194 aa).

An N-terminal signal peptide occupies residues 1–15 (MFVLSIALLSCTTLC). The PAN domain occupies 49–134 (CPQGLHADAI…KATYYEKIRC (86 aa)). Cystine bridges form between Cys-49-Cys-134 and Cys-79-Cys-106.

This is an uncharacterized protein from Caenorhabditis elegans.